Consider the following 1604-residue polypeptide: Ubiquitin carboxyl-terminal hydrolase 32 (1604 aa).

EF-hand domains are found at residues 91-126 (KDEEKAKYIFSLFSSESGSYVVREEMERMLHVVDGK), 228-263 (IRPSLSEGLFNAFDENRDNHIDFKEISCGLSACCRG), and 264-299 (PLAERQKFCFKVFDVDRDGVLSRVELKDMVVALLEV). 9 residues coordinate Ca(2+): Asp-241, Asn-243, Asp-245, His-247, Glu-252, Asp-277, Asp-279, Asp-281, and Glu-288. The 217-residue stretch at 369-585 (ATPEEEGQII…SNLALPRPVI (217 aa)) folds into the DUSP domain. Positions 734–1567 (TGLSNLGNTC…SAYILFYEQQ (834 aa)) constitute a USP domain. Catalysis depends on Cys-743, which acts as the Nucleophile. Tyr-1173 is subject to Phosphotyrosine. Ser-1350 is modified (phosphoserine). Positions 1353 to 1432 (EEDVLLSKSP…SKENLDTSKE (80 aa)) are disordered. A compositionally biased stretch (polar residues) spans 1360–1370 (KSPSSLSANVT). A compositionally biased stretch (low complexity) spans 1371 to 1399 (SSPKGSPSSSRKSGASCPSSKNSSPNSSP). Residues Ser-1372 and Ser-1376 each carry the phosphoserine modification. The segment covering 1415-1424 (GSKNKLSNSK) has biased composition (polar residues). Ser-1454 carries the phosphoserine modification. A disordered region spans residues 1484 to 1504 (SNGQLGNHSEEDSTDDQREET). The segment covering 1491 to 1504 (HSEEDSTDDQREET) has biased composition (basic and acidic residues). The Proton acceptor role is filled by His-1526. Ser-1588 is subject to Phosphoserine. A Cysteine methyl ester modification is found at Cys-1601. Cys-1601 is lipidated: S-farnesyl cysteine. Residues 1602 to 1604 (VLQ) constitute a propeptide, removed in mature form.

It belongs to the peptidase C19 family.

Its subcellular location is the golgi apparatus membrane. The catalysed reaction is Thiol-dependent hydrolysis of ester, thioester, amide, peptide and isopeptide bonds formed by the C-terminal Gly of ubiquitin (a 76-residue protein attached to proteins as an intracellular targeting signal).. In terms of biological role, deubiquitinase that can remove conjugated ubiquitin from target proteins, such as RAB7A and LAMTOR1. Acts as a positive regulator of the mTORC1 signaling by mediating deubiquitination of LAMTOR1, thereby promoting the association between LAMTOR1 and the lysosomal V-ATPase complex and subsequent activation of the mTORC1 complex. The chain is Ubiquitin carboxyl-terminal hydrolase 32 from Mus musculus (Mouse).